A 633-amino-acid chain; its full sequence is Alpha-amylase (633 aa).

Glu-123 serves as the catalytic Nucleophile. Asp-214 functions as the Proton donor in the catalytic mechanism.

Belongs to the glycosyl hydrolase 57 family.

It catalyses the reaction Endohydrolysis of (1-&gt;4)-alpha-D-glucosidic linkages in polysaccharides containing three or more (1-&gt;4)-alpha-linked D-glucose units.. This chain is Alpha-amylase (amyA), found in Pyrococcus horikoshii (strain ATCC 700860 / DSM 12428 / JCM 9974 / NBRC 100139 / OT-3).